Consider the following 260-residue polypeptide: 14-3-3-like protein GF14-F (260 aa).

A disordered region spans residues 241-260 (NAEDGGDEIKEAAKPEGEGH). Over residues 247-260 (DEIKEAAKPEGEGH) the composition is skewed to basic and acidic residues.

The protein belongs to the 14-3-3 family. May form a complex with the transcriptional activator VP1 and the bZIP transcription factor EMBP1. As to expression, expressed in seedlings, roots and panicles and at lower levels in flag leaves and internodes.

It is found in the cytoplasm. The protein resides in the nucleus. Is associated with a DNA binding complex that binds to the G box, a well-characterized cis-acting DNA regulatory element found in plant genes. The sequence is that of 14-3-3-like protein GF14-F (GF14F) from Oryza sativa subsp. japonica (Rice).